We begin with the raw amino-acid sequence, 153 residues long: Ribosome maturation factor RimP (153 aa).

This sequence belongs to the RimP family.

Its subcellular location is the cytoplasm. Its function is as follows. Required for maturation of 30S ribosomal subunits. The sequence is that of Ribosome maturation factor RimP from Marinobacter nauticus (strain ATCC 700491 / DSM 11845 / VT8) (Marinobacter aquaeolei).